Reading from the N-terminus, the 201-residue chain is Probable nicotinate-nucleotide adenylyltransferase (201 aa).

This sequence belongs to the NadD family.

It catalyses the reaction nicotinate beta-D-ribonucleotide + ATP + H(+) = deamido-NAD(+) + diphosphate. It functions in the pathway cofactor biosynthesis; NAD(+) biosynthesis; deamido-NAD(+) from nicotinate D-ribonucleotide: step 1/1. Catalyzes the reversible adenylation of nicotinate mononucleotide (NaMN) to nicotinic acid adenine dinucleotide (NaAD). In Clostridium botulinum (strain Langeland / NCTC 10281 / Type F), this protein is Probable nicotinate-nucleotide adenylyltransferase.